The primary structure comprises 369 residues: Glutamate 5-kinase (369 aa).

Position 14 (lysine 14) interacts with ATP. Substrate contacts are provided by serine 56, aspartate 143, and asparagine 155. ATP is bound by residues 175–176 (SD) and 215–221 (TGGMASK). Positions 277-351 (AGKIRLDDGA…GMQTQDLPDG (75 aa)) constitute a PUA domain.

The protein belongs to the glutamate 5-kinase family.

The protein resides in the cytoplasm. It carries out the reaction L-glutamate + ATP = L-glutamyl 5-phosphate + ADP. Its pathway is amino-acid biosynthesis; L-proline biosynthesis; L-glutamate 5-semialdehyde from L-glutamate: step 1/2. In terms of biological role, catalyzes the transfer of a phosphate group to glutamate to form L-glutamate 5-phosphate. The protein is Glutamate 5-kinase of Corynebacterium glutamicum (strain ATCC 13032 / DSM 20300 / JCM 1318 / BCRC 11384 / CCUG 27702 / LMG 3730 / NBRC 12168 / NCIMB 10025 / NRRL B-2784 / 534).